Consider the following 416-residue polypeptide: Floricaula/leafy homolog 2 (416 aa).

Residues 154-237 form a disordered region; the sequence is EGLSEEPVQQ…DASGGISERQ (84 aa). Over residues 210-225 the composition is skewed to acidic residues; that stretch reads AEEDEETEEGQEDDWN. DNA-binding regions lie at residues 238–242, 307–314, and 378–381; these read REHPF, NKPKMRHY, and YVPT.

It belongs to the FLO/LFY family. As to expression, expressed in floral meristems and in indeterminate vegetative meristems.

It localises to the nucleus. Functionally, probable transcription factor that act to specify determinacy in the progenitor cells for both flowers and leaves. The polypeptide is Floricaula/leafy homolog 2 (FL2) (Nicotiana tabacum (Common tobacco)).